The chain runs to 368 residues: tRNA-specific 2-thiouridylase MnmA (368 aa).

ATP contacts are provided by residues 24–31 (AMSGGVDS) and Leu-50. Catalysis depends on Cys-117, which acts as the Nucleophile. Cys-117 and Cys-213 form a disulfide bridge. ATP is bound at residue Gly-141. Residues 163-165 (KDQ) are interaction with tRNA. Catalysis depends on Cys-213, which acts as the Cysteine persulfide intermediate.

The protein belongs to the MnmA/TRMU family.

The protein localises to the cytoplasm. The catalysed reaction is S-sulfanyl-L-cysteinyl-[protein] + uridine(34) in tRNA + AH2 + ATP = 2-thiouridine(34) in tRNA + L-cysteinyl-[protein] + A + AMP + diphosphate + H(+). Its function is as follows. Catalyzes the 2-thiolation of uridine at the wobble position (U34) of tRNA, leading to the formation of s(2)U34. This chain is tRNA-specific 2-thiouridylase MnmA, found in Wolbachia pipientis subsp. Culex pipiens (strain wPip).